Here is an 82-residue protein sequence, read N- to C-terminus: MKKNVHPKYNEISAYCSCGNIINTKSTLNRNLNIDVCHLCHPFYTGTQRILDTRGRVNIFNKRFNLSINADFLPIDKKLNKK.

Zn(2+) contacts are provided by Cys16, Cys18, Cys37, and Cys40.

This sequence belongs to the bacterial ribosomal protein bL31 family. Type A subfamily. Part of the 50S ribosomal subunit. Zn(2+) is required as a cofactor.

In terms of biological role, binds the 23S rRNA. This Blochmanniella pennsylvanica (strain BPEN) protein is Large ribosomal subunit protein bL31.